A 333-amino-acid chain; its full sequence is tRNA pseudouridine synthase B (333 aa).

The Nucleophile role is filled by Asp46.

The protein belongs to the pseudouridine synthase TruB family. Type 1 subfamily.

It catalyses the reaction uridine(55) in tRNA = pseudouridine(55) in tRNA. Functionally, responsible for synthesis of pseudouridine from uracil-55 in the psi GC loop of transfer RNAs. This Gluconobacter oxydans (strain 621H) (Gluconobacter suboxydans) protein is tRNA pseudouridine synthase B.